A 159-amino-acid chain; its full sequence is C-type lectin 1 (159 aa).

Residues 1 to 23 (MGRFIFISFGLLVVFFFLSGAKG) form the signal peptide. Disulfide bonds link C26–C37, C54–C155, C61–C157, and C130–C147. One can recognise a C-type lectin domain in the interval 33-156 (MYGLCYKIFD…CKVKNAFLCQ (124 aa)). The N-linked (GlcNAc...) asparagine glycan is linked to N118. Positions 119 to 121 (LTD) match the Sugar-binding motif. Ca(2+) is bound by residues D121, D127, and N143.

It belongs to the true venom lectin family. As to quaternary structure, homodimer; disulfide-linked. In terms of tissue distribution, expressed by the venom gland.

The protein localises to the secreted. Functionally, lectin which recognizes specific carbohydrate structures and agglutinates a variety of animal cells by binding to cell-surface glycoproteins and glycolipids. May be a calcium-dependent lectin. This Bitis gabonica (Gaboon adder) protein is C-type lectin 1.